A 299-amino-acid polypeptide reads, in one-letter code: Virginiamycin B lyase (299 aa).

His-229 is a substrate binding site. Residue Glu-269 coordinates Mg(2+). Catalysis depends on His-271, which acts as the Proton acceptor. Mg(2+) is bound at residue Glu-286.

Belongs to the Vgb family. Monomer. Mg(2+) is required as a cofactor.

In terms of biological role, inactivates the type B streptogramin antibiotics by linearizing the lactone ring at the ester linkage, generating a free phenylglycine carboxylate and converting the threonyl moiety into 2-amino-butenoic acid. The protein is Virginiamycin B lyase of Bordetella parapertussis (strain 12822 / ATCC BAA-587 / NCTC 13253).